The chain runs to 156 residues: ATP synthase subunit b (156 aa).

A helical transmembrane segment spans residues 7-29; it reads LIAQAISFAILIWFTTKFVWPYL.

Belongs to the ATPase B chain family. In terms of assembly, F-type ATPases have 2 components, F(1) - the catalytic core - and F(0) - the membrane proton channel. F(1) has five subunits: alpha(3), beta(3), gamma(1), delta(1), epsilon(1). F(0) has three main subunits: a(1), b(2) and c(10-14). The alpha and beta chains form an alternating ring which encloses part of the gamma chain. F(1) is attached to F(0) by a central stalk formed by the gamma and epsilon chains, while a peripheral stalk is formed by the delta and b chains.

The protein localises to the cell inner membrane. F(1)F(0) ATP synthase produces ATP from ADP in the presence of a proton or sodium gradient. F-type ATPases consist of two structural domains, F(1) containing the extramembraneous catalytic core and F(0) containing the membrane proton channel, linked together by a central stalk and a peripheral stalk. During catalysis, ATP synthesis in the catalytic domain of F(1) is coupled via a rotary mechanism of the central stalk subunits to proton translocation. Functionally, component of the F(0) channel, it forms part of the peripheral stalk, linking F(1) to F(0). The polypeptide is ATP synthase subunit b (Methylobacillus flagellatus (strain ATCC 51484 / DSM 6875 / VKM B-1610 / KT)).